Consider the following 569-residue polypeptide: MMRFTKFYAPSLKEAPKDASLPSHIFLTRAGFVEQIGSGLYNFLPLGKRVLDKIKNIVKEEMDKAGAQEVNLSFITPASLWQESGRYNVFGKELLRFKDRKENEFVLGPTHEEAMLSLVKNKITSYKQLPLHLYQIGLKFRDEARPRFGLLRCREFLMKDGYSFHANEEDLGREFELMYKTYSQILQRMGLDFRAVEADSGAIGGSGSKEFMVLAKNGEDDILICENCDYAANVEAAKRAKKTCQDERPEANYASKFHTPNIKTIDSLAQFFKINAFYTIKAVVKKAIYENESKLVVFFIRGSDDLQEVKAQNTCSALELVDASEEELKKAGLVAGFIGFVGLKDIDFYIDFELENEKQMIMGANEKDYHLIGIDVVNLNKDRFKDLIEVKEGDCCVKCGAKLKQSKGIEVGHIFKLGQKYSKAMNANFLDENGKSQPFYMGCYGIGVSRLLAVAIEANHDEKGCIWNKTLAPFVLEIIVSNLKDEKALEFANKLYRDLTNLGLEVLLDDRNERFGVKMNDFELMGFPYALVIGKGLENNEIELIQREGLVKELIKTDELMEILKKKVL.

This sequence belongs to the class-II aminoacyl-tRNA synthetase family. ProS type 1 subfamily. As to quaternary structure, homodimer.

It localises to the cytoplasm. It catalyses the reaction tRNA(Pro) + L-proline + ATP = L-prolyl-tRNA(Pro) + AMP + diphosphate. Catalyzes the attachment of proline to tRNA(Pro) in a two-step reaction: proline is first activated by ATP to form Pro-AMP and then transferred to the acceptor end of tRNA(Pro). As ProRS can inadvertently accommodate and process non-cognate amino acids such as alanine and cysteine, to avoid such errors it has two additional distinct editing activities against alanine. One activity is designated as 'pretransfer' editing and involves the tRNA(Pro)-independent hydrolysis of activated Ala-AMP. The other activity is designated 'posttransfer' editing and involves deacylation of mischarged Ala-tRNA(Pro). The misacylated Cys-tRNA(Pro) is not edited by ProRS. This Campylobacter jejuni subsp. jejuni serotype O:2 (strain ATCC 700819 / NCTC 11168) protein is Proline--tRNA ligase.